The following is a 359-amino-acid chain: Photosystem II protein D1 1 (359 aa).

A run of 3 helical transmembrane segments spans residues 29–46 (YVGW…AATT), 118–133 (HFLI…EWEL), and 142–156 (WICI…AASA). Position 118 (His118) interacts with chlorophyll a. Residue Tyr126 coordinates pheophytin a. [CaMn4O5] cluster is bound by residues Asp170 and Glu189. The helical transmembrane segment at 197 to 218 (FHMLGVAGVFGGSLFSAMHGSL) threads the bilayer. Residue His198 participates in chlorophyll a binding. A quinone is bound by residues His215 and 264–265 (SF). His215 lines the Fe cation pocket. His272 provides a ligand contact to Fe cation. The helical transmembrane segment at 274 to 288 (FLAAWPVVGIWFTAL) threads the bilayer. 4 residues coordinate [CaMn4O5] cluster: His332, Glu333, Asp342, and Ala344. The propeptide occupies 345-359 (AAESAPVALQAPAIG).

It belongs to the reaction center PufL/M/PsbA/D family. PSII is composed of 1 copy each of membrane proteins PsbA, PsbB, PsbC, PsbD, PsbE, PsbF, PsbH, PsbI, PsbJ, PsbK, PsbL, PsbM, PsbT, PsbX, PsbY, PsbZ, Psb30/Ycf12, peripheral proteins PsbO, CyanoQ (PsbQ), PsbU, PsbV and a large number of cofactors. It forms dimeric complexes. Requires The D1/D2 heterodimer binds P680, chlorophylls that are the primary electron donor of PSII, and subsequent electron acceptors. It shares a non-heme iron and each subunit binds pheophytin, quinone, additional chlorophylls, carotenoids and lipids. D1 provides most of the ligands for the Mn4-Ca-O5 cluster of the oxygen-evolving complex (OEC). There is also a Cl(-1) ion associated with D1 and D2, which is required for oxygen evolution. The PSII complex binds additional chlorophylls, carotenoids and specific lipids. as cofactor. In terms of processing, tyr-161 forms a radical intermediate that is referred to as redox-active TyrZ, YZ or Y-Z. C-terminally processed by CtpA; processing is essential to allow assembly of the oxygen-evolving complex and thus photosynthetic growth.

The protein localises to the cellular thylakoid membrane. It carries out the reaction 2 a plastoquinone + 4 hnu + 2 H2O = 2 a plastoquinol + O2. Functionally, photosystem II (PSII) is a light-driven water:plastoquinone oxidoreductase that uses light energy to abstract electrons from H(2)O, generating O(2) and a proton gradient subsequently used for ATP formation. It consists of a core antenna complex that captures photons, and an electron transfer chain that converts photonic excitation into a charge separation. The D1/D2 (PsbA/PsbD) reaction center heterodimer binds P680, the primary electron donor of PSII as well as several subsequent electron acceptors. The chain is Photosystem II protein D1 1 from Synechococcus sp. (strain RCC307).